We begin with the raw amino-acid sequence, 235 residues long: (5-formylfuran-3-yl)methyl phosphate synthase (235 aa).

The Schiff-base intermediate with substrate role is filled by lysine 27. The Proton acceptor role is filled by lysine 85.

This sequence belongs to the MfnB family. In terms of assembly, homohexamer. Trimer of dimers.

It catalyses the reaction 2 D-glyceraldehyde 3-phosphate = 4-(hydroxymethyl)-2-furancarboxaldehyde phosphate + phosphate + 2 H2O. It participates in cofactor biosynthesis; methanofuran biosynthesis. Catalyzes the formation of 4-(hydroxymethyl)-2-furancarboxaldehyde phosphate (4-HFC-P) from two molecules of glyceraldehyde-3-P (GA-3-P). The polypeptide is (5-formylfuran-3-yl)methyl phosphate synthase (Methanocaldococcus jannaschii (strain ATCC 43067 / DSM 2661 / JAL-1 / JCM 10045 / NBRC 100440) (Methanococcus jannaschii)).